The following is a 303-amino-acid chain: MYYGFDIGGTKIALGVFDSGRQLQWEKRVPTPRDSYDAFLDAVCELVAEADQRFGCKGSVGIGIPGMPETEDGTLYAANVPAASGKPLRADLSARLDRDVRLDNDANCFALSEAWDDEFTQYPLVMGLILGTGVGGGLIFNGKPITGKSYITGEFGHMRLPVDALTMMGLDFPLRRCGCGQIGCIENYLSGRGFAWLWQHYYHQPLQAPEIIALYDQGDEQARAHVERYLDLLAVCLGNILTIVDSDLVVIGGGLSNFPAITTQLADRLPRHLLPVARVPRIERARHGDAGGMRGAAFLHLTD.

ATP-binding positions include 4–11 (GFDIGGTK) and 133–140 (GVGGGLIF). Residues histidine 157, cysteine 177, cysteine 179, and cysteine 184 each contribute to the Zn(2+) site.

This sequence belongs to the ROK (NagC/XylR) family. NagK subfamily.

The enzyme catalyses N-acetyl-D-glucosamine + ATP = N-acetyl-D-glucosamine 6-phosphate + ADP + H(+). It functions in the pathway cell wall biogenesis; peptidoglycan recycling. Catalyzes the phosphorylation of N-acetyl-D-glucosamine (GlcNAc) derived from cell-wall degradation, yielding GlcNAc-6-P. This chain is N-acetyl-D-glucosamine kinase, found in Shigella sonnei (strain Ss046).